The following is a 357-amino-acid chain: Peptide chain release factor 1 (357 aa).

Residue Q234 is modified to N5-methylglutamine. The segment at 282–313 (DSKKQEQRSNNRKQQVGSGDRSERIRTYNFPQ) is disordered.

This sequence belongs to the prokaryotic/mitochondrial release factor family. In terms of processing, methylated by PrmC. Methylation increases the termination efficiency of RF1.

It is found in the cytoplasm. Functionally, peptide chain release factor 1 directs the termination of translation in response to the peptide chain termination codons UAG and UAA. This chain is Peptide chain release factor 1, found in Borreliella afzelii (strain PKo) (Borrelia afzelii).